The following is a 391-amino-acid chain: Succinate--CoA ligase [ADP-forming] subunit beta (391 aa).

In terms of domain architecture, ATP-grasp spans 9-245 (KQIFAKYGVP…ISEEDADERE (237 aa)). ATP contacts are provided by residues K46, 53–55 (GRG), E99, A102, and E107. Mg(2+) contacts are provided by N200 and D214. Residues N265 and 322–324 (GIV) contribute to the substrate site.

It belongs to the succinate/malate CoA ligase beta subunit family. As to quaternary structure, heterotetramer of two alpha and two beta subunits. Mg(2+) serves as cofactor.

The catalysed reaction is succinate + ATP + CoA = succinyl-CoA + ADP + phosphate. It catalyses the reaction GTP + succinate + CoA = succinyl-CoA + GDP + phosphate. The protein operates within carbohydrate metabolism; tricarboxylic acid cycle; succinate from succinyl-CoA (ligase route): step 1/1. Its function is as follows. Succinyl-CoA synthetase functions in the citric acid cycle (TCA), coupling the hydrolysis of succinyl-CoA to the synthesis of either ATP or GTP and thus represents the only step of substrate-level phosphorylation in the TCA. The beta subunit provides nucleotide specificity of the enzyme and binds the substrate succinate, while the binding sites for coenzyme A and phosphate are found in the alpha subunit. The protein is Succinate--CoA ligase [ADP-forming] subunit beta of Sulfurimonas denitrificans (strain ATCC 33889 / DSM 1251) (Thiomicrospira denitrificans (strain ATCC 33889 / DSM 1251)).